Reading from the N-terminus, the 152-residue chain is Transcriptional regulator MraZ (152 aa).

2 SpoVT-AbrB domains span residues 5–52 and 81–124; these read ATMV…PLPE and ASEC…DEQT.

The protein belongs to the MraZ family. Forms oligomers.

Its subcellular location is the cytoplasm. It localises to the nucleoid. Its function is as follows. Negatively regulates its own expression and that of the subsequent genes in the proximal part of the division and cell wall (dcw) gene cluster. Acts by binding directly to DNA. May also regulate the expression of genes outside the dcw cluster. This is Transcriptional regulator MraZ from Yersinia pestis bv. Antiqua (strain Antiqua).